A 340-amino-acid polypeptide reads, in one-letter code: MKILLIYSMTPKLVIWFTLFVLCLQMGDTFDISINNEEIDNPGLIIKSKFKKYLPELQENLEIPITEKQQSIKESFIPRRINYPHYGLRSRFRKDIAISETTTTTTQESETSIATNGDSFDSDNGENKSDSSDDESSNNEGNDKSDATFKSLSSSSPTVVHSRRSWIKDFLIFKEQKVSTMSSSSSSSSGSLRDKSKLKQENKQLQSRIKNYDDTVSDPRDLKRWVRLIADEGKNEFGKKHSSKNYIQKNEIELDIEEFIHYLVEEQGFNSSDLEFLRLKNLDYGLGEIEKELNKLKEAKGSPKVISIGGEDENSAPLLWIKISKPTVCLVIALTFLLLG.

Positions 1-29 (MKILLIYSMTPKLVIWFTLFVLCLQMGDT) are cleaved as a signal peptide. Residues 99-115 (SETTTTTTQESETSIAT) show a composition bias toward low complexity. Disordered regions lie at residues 99-154 (SETT…SLSS) and 181-212 (MSSS…IKNY). N-linked (GlcNAc...) asparagine glycosylation occurs at Asn127. The span at 182–191 (SSSSSSSSGS) shows a compositional bias: low complexity. Over residues 192–202 (LRDKSKLKQEN) the composition is skewed to basic and acidic residues. N-linked (GlcNAc...) asparagine glycosylation occurs at Asn270. A lipid anchor (GPI-anchor amidated asparagine) is attached at Asn314. Residues 315-340 (SAPLLWIKISKPTVCLVIALTFLLLG) constitute a propeptide, removed in mature form.

The protein localises to the cell membrane. Its subcellular location is the secreted. In Candida albicans (strain SC5314 / ATCC MYA-2876) (Yeast), this protein is Predicted GPI-anchored protein 46 (PGA46).